We begin with the raw amino-acid sequence, 210 residues long: Rho-related GTP-binding protein RhoD (210 aa).

24–31 is a binding site for GTP; sequence GDGGCGKT. Residues 46–54 carry the Effector region motif; sequence YTPTVFERY. Residues 71–75 and 129–132 each bind GTP; these read DTAGQ and CKTD. Cys207 is subject to Cysteine methyl ester. Residue Cys207 is the site of S-geranylgeranyl cysteine attachment. Positions 208–210 are cleaved as a propeptide — removed in mature form; sequence VVT.

Belongs to the small GTPase superfamily. Rho family. As to quaternary structure, interacts (in GTP-bound form) with DIAPH2 isoform 3, DAPK3, FILIP1 and WHAMM. Interacts with PAK5. Interacts (independent of GTP-loaded status) with ANKFY1. Heart, placenta, liver, skeletal muscle, and pancreas and, with weaker intensity, in several other tissues.

It localises to the cell membrane. The protein localises to the early endosome. Its function is as follows. Involved in endosome dynamics. May coordinate membrane transport with the function of the cytoskeleton. Involved in the internalization and trafficking of activated tyrosine kinase receptors such as PDGFRB. Participates in the reorganization of actin cytoskeleton; the function seems to involve WHAMM and includes regulation of filopodia formation and actin filament bundling. Can modulate the effect of DAPK3 in reorganization of actin cytoskeleton and focal adhesion dissolution. In Homo sapiens (Human), this protein is Rho-related GTP-binding protein RhoD.